Here is a 168-residue protein sequence, read N- to C-terminus: Lipoprotein signal peptidase (168 aa).

A run of 3 helical transmembrane segments spans residues 8 to 28 (TLLV…VVLL), 70 to 90 (KYFL…YLFF), and 104 to 124 (VLLC…GHIV). Residues D125 and D143 contribute to the active site. A helical membrane pass occupies residues 134–154 (WAFPTFNVADVLISLGTLLLV).

The protein belongs to the peptidase A8 family.

It localises to the cell inner membrane. It catalyses the reaction Release of signal peptides from bacterial membrane prolipoproteins. Hydrolyzes -Xaa-Yaa-Zaa-|-(S,diacylglyceryl)Cys-, in which Xaa is hydrophobic (preferably Leu), and Yaa (Ala or Ser) and Zaa (Gly or Ala) have small, neutral side chains.. It functions in the pathway protein modification; lipoprotein biosynthesis (signal peptide cleavage). This protein specifically catalyzes the removal of signal peptides from prolipoproteins. The polypeptide is Lipoprotein signal peptidase (Chlamydia pneumoniae (Chlamydophila pneumoniae)).